A 458-amino-acid polypeptide reads, in one-letter code: Argininosuccinate lyase (458 aa).

Belongs to the lyase 1 family. Argininosuccinate lyase subfamily.

Its subcellular location is the cytoplasm. The catalysed reaction is 2-(N(omega)-L-arginino)succinate = fumarate + L-arginine. Its pathway is amino-acid biosynthesis; L-arginine biosynthesis; L-arginine from L-ornithine and carbamoyl phosphate: step 3/3. In Salmonella schwarzengrund (strain CVM19633), this protein is Argininosuccinate lyase.